The following is a 259-amino-acid chain: Global transcriptional regulator CodY (259 aa).

The GAF domain stretch occupies residues 1–155 (MNLLEKTRKI…GATVVGMEIL (155 aa)). The H-T-H motif DNA-binding region spans 203–222 (ASKIADRVGITRSVIVNALR). At Ser215 the chain carries Phosphoserine.

The protein belongs to the CodY family.

Its subcellular location is the cytoplasm. DNA-binding global transcriptional regulator which is involved in the adaptive response to starvation and acts by directly or indirectly controlling the expression of numerous genes in response to nutrient availability. During rapid exponential growth, CodY is highly active and represses genes whose products allow adaptation to nutrient depletion. This chain is Global transcriptional regulator CodY, found in Geobacillus kaustophilus (strain HTA426).